Here is a 321-residue protein sequence, read N- to C-terminus: Taste receptor type 2 member 135 (321 aa).

Residues 1-28 (MGPIMSTGETSTAHTVLGCQITDKTVIT) are Extracellular-facing. The helical transmembrane segment at 29–49 (LFVILVFSCLVAVVGNGFIII) threads the bilayer. At 50–75 (ALGMKWLLRRTLSAHNKLLISLAASR) the chain is on the cytoplasmic side. Residues 76–96 (FCLQCVVIGKNIYVFLNPSSF) traverse the membrane as a helical segment. The Extracellular portion of the chain corresponds to 97–106 (PYNPVIQLLN). The chain crosses the membrane as a helical span at residues 107–127 (LMWDFLTAATIWFCSLLGFFY). Over 128–149 (CVKIATLTHPVFVWLKYRLPGW) the chain is Cytoplasmic. The helical transmembrane segment at 150–170 (VPWMLLSAVGMSSLTSILCFI) threads the bilayer. Residues 171–207 (GNHMIYQNYARRGHQPWNATGNSLRHSLEKFYFISIK) are Extracellular-facing. Asn188 is a glycosylation site (N-linked (GlcNAc...) asparagine). The helical transmembrane segment at 208-228 (IIMWTVPTVIFSIFMSLLLVS) threads the bilayer. Residues 229–253 (LVRHMKKTLLALSELRDVWAQAHFK) lie on the Cytoplasmic side of the membrane. The helical transmembrane segment at 254-274 (ALLPLLSFIILFISCFLTLVL) threads the bilayer. Residues 275 to 286 (SSASSTPYQEFR) lie on the Extracellular side of the membrane. The helical transmembrane segment at 287 to 307 (YWMWQVVIHLCTVIHPIVILL) threads the bilayer. Over 308–321 (SNPVLRVVMKRGCC) the chain is Cytoplasmic.

Belongs to the G-protein coupled receptor T2R family.

Its subcellular location is the membrane. Its function is as follows. Putative taste receptor which may play a role in the perception of bitterness. This Rattus norvegicus (Rat) protein is Taste receptor type 2 member 135.